Here is a 2035-residue protein sequence, read N- to C-terminus: Envoplakin (2035 aa).

Residues 1–27 (MFKGLSKGSQGKGSPKGSPAKGSPKGS) show a composition bias toward low complexity. Disordered regions lie at residues 1-37 (MFKG…AATQ) and 63-84 (KLQQ…QETG). The interval 1 to 841 (MFKGLSKGSQ…LEPALAVSAP (841 aa)) is globular 1. The segment at 12–28 (KGSPKGSPAKGSPKGSP) is 4 X 4 AA tandem repeats of K-G-S-P. Residues 71–84 (GEQNQALQHQQETG) are compositionally biased toward polar residues. The Spectrin repeat unit spans residues 229–330 (YTHLQGCTKQ…LCICQESQLQ (102 aa)). A disordered region spans residues 400–419 (QEVAPLPQRRNPSKQPLHVD). One can recognise an SH3 domain in the interval 413 to 470 (KQPLHVDSICDWDSGEVQLLRGERYTLKDNADPYTWLVQGPGGETKSAPAACLCIPAP). Residues 842 to 1664 (KRLRVISLQE…EKERTLRDLH (823 aa)) adopt a coiled-coil conformation. Residues 842 to 1674 (KRLRVISLQE…TKVSREELNQ (833 aa)) form a central fibrous rod domain region. A Plectin 1 repeat occupies 1186–1227 (KQKPKVQLQERVSEIFQVLPETEQEIRRLRAQLQETGSKKSG). Ser1576 carries the phosphoserine modification. Residues 1607-1631 (KQQKARQLQEEGRLLSQKTESERQK) show a composition bias toward basic and acidic residues. The disordered stretch occupies residues 1607–1637 (KQQKARQLQEEGRLLSQKTESERQKAAQRSQ). The tract at residues 1675 to 2035 (ETQTRETNLS…SPTLPRSCVR (361 aa)) is globular 2. Residues 1679-1714 (RETNLSTKICILEPETGNDMSPYEAYKRGVIDRGQY) form a Plectin 2 repeat. The residue at position 1800 (Ser1800) is a Phosphoserine. 5 Plectin repeats span residues 1819-1856 (FGLT…PITG), 1857-1894 (QKLL…NTST), 1895-1932 (QRLL…QESV), 1933-1970 (LPHL…EDLG), and 1971-2008 (QLLQ…PLSG). At Ser2026 the chain carries Phosphoserine.

The protein belongs to the plakin or cytolinker family. In terms of assembly, may form a homodimer or a heterodimer with PPL.

The protein resides in the cell junction. It is found in the desmosome. Its subcellular location is the cornified envelope. It localises to the cytoplasm. The protein localises to the cytoskeleton. Its function is as follows. Component of the cornified envelope of keratinocytes. May link the cornified envelope to desmosomes and intermediate filaments. The sequence is that of Envoplakin (Evpl) from Mus musculus (Mouse).